Here is a 294-residue protein sequence, read N- to C-terminus: 4-hydroxy-tetrahydrodipicolinate synthase (294 aa).

A pyruvate-binding site is contributed by T45. Residue Y133 is the Proton donor/acceptor of the active site. The active-site Schiff-base intermediate with substrate is K161. Residue I203 coordinates pyruvate.

It belongs to the DapA family. As to quaternary structure, homotetramer; dimer of dimers.

The protein localises to the cytoplasm. It catalyses the reaction L-aspartate 4-semialdehyde + pyruvate = (2S,4S)-4-hydroxy-2,3,4,5-tetrahydrodipicolinate + H2O + H(+). The protein operates within amino-acid biosynthesis; L-lysine biosynthesis via DAP pathway; (S)-tetrahydrodipicolinate from L-aspartate: step 3/4. In terms of biological role, catalyzes the condensation of (S)-aspartate-beta-semialdehyde [(S)-ASA] and pyruvate to 4-hydroxy-tetrahydrodipicolinate (HTPA). This is 4-hydroxy-tetrahydrodipicolinate synthase from Thioalkalivibrio sulfidiphilus (strain HL-EbGR7).